Reading from the N-terminus, the 306-residue chain is Polyadenylate-binding protein 2 (306 aa).

The segment covering 1-12 (MAAAAAAAAAAG) has biased composition (low complexity). The disordered stretch occupies residues 1–115 (MAAAAAAAAA…EGDPGDGAIE (115 aa)). Residue alanine 2 is modified to N-acetylalanine. Residues 2-145 (AAAAAAAAAA…LKELQNEVEK (144 aa)) form an interaction with SKIP region. Position 17 is an omega-N-methylarginine (arginine 17). Phosphoserine is present on serine 19. Residues 30–47 (GAGGEAGEGAPGGAGDYG) are compositionally biased toward gly residues. Residues 51-72 (ESEELEPEELLLEPEPEPEPEE) show a composition bias toward acidic residues. Serine 52 bears the Phosphoserine mark. Positions 77-87 (PRAPPGAPGPG) are enriched in pro residues. The stretch at 115-151 (EDPELEAIKARVREMEEEAEKLKELQNEVEKQMNMSP) forms a coiled coil. A stimulates PAPOLA region spans residues 119–147 (LEAIKARVREMEEEAEKLKELQNEVEKQM). Phosphoserine occurs at positions 150 and 235. The interval 155–306 (NAGPVIMSIE…ARATSWYSPY (152 aa)) is necessary for homooligomerization. Residues 172–249 (RSIYVGNVDY…RQIKVIPKRT (78 aa)) form the RRM domain. Arginine 238, arginine 259, and arginine 263 each carry asymmetric dimethylarginine; alternate. Omega-N-methylarginine; alternate occurs at positions 238, 259, and 263. An asymmetric dimethylarginine mark is found at arginine 265, arginine 267, arginine 269, arginine 277, arginine 279, arginine 287, arginine 289, arginine 291, arginine 294, arginine 296, and arginine 298. The tract at residues 286 to 306 (SRPRGRVYRGRARATSWYSPY) is interaction with PAPOLA.

As to quaternary structure, monomer and homooligomer. Binds RNA as a monomer and oligomerizes when bound to poly(A). Associates in a ternary complex with CPSF4 and NS/NS1 and interaction with NS/NS1, blocks nuclear export of host cell mRNAs. Associates in a single complex with SKIP and MYOD1 and interacts with SKIP in differentiated myocytes. Interacts with NUDT21/CPSF5. Identified in a IGF2BP1-dependent mRNP granule complex containing untranslated mRNAs. Interacts with PAPOLA, but only in presence of oligo(A) RNA. Interacts with transportin. May interact with SETX. Interacts (via RRM domain and C-terminal arginine-rich region) with ZFP36 (via hypophosphorylated form); this interaction occurs in the nucleus in a RNA-independent manner, decreases in presence of single-stranded poly(A) RNA-oligomer and in a p38-dependent-manner and may down-regulated RNA poly(A) polymerase activity. Component of the poly(A) tail exosome targeting (PAXT) complex composed of PABPN1, ZFC3H1 and MTREX. Interacts with ZFC3H1 in a RNase-insensitive manner. Interacts with FRG1. Interacts with ZC3H11A. Post-translationally, arginine dimethylation is asymmetric and involves PRMT1 and PRMT3. It does not influence the RNA binding properties. In terms of tissue distribution, ubiquitous.

It is found in the nucleus. The protein localises to the cytoplasm. It localises to the nucleus speckle. Functionally, involved in the 3'-end formation of mRNA precursors (pre-mRNA) by the addition of a poly(A) tail of 200-250 nt to the upstream cleavage product. Stimulates poly(A) polymerase (PAPOLA) conferring processivity on the poly(A) tail elongation reaction and also controls the poly(A) tail length. Increases the affinity of poly(A) polymerase for RNA. Is also present at various stages of mRNA metabolism including nucleocytoplasmic trafficking and nonsense-mediated decay (NMD) of mRNA. Cooperates with SKIP to synergistically activate E-box-mediated transcription through MYOD1 and may regulate the expression of muscle-specific genes. Binds to poly(A) and to poly(G) with high affinity. May protect the poly(A) tail from degradation. Subunit of the trimeric poly(A) tail exosome targeting (PAXT) complex, a complex that directs a subset of long and polyadenylated poly(A) RNAs for exosomal degradation. The RNA exosome is fundamental for the degradation of RNA in eukaryotic nuclei. Substrate targeting is facilitated by its cofactor MTREX, which links to RNA-binding protein adapters. The protein is Polyadenylate-binding protein 2 (PABPN1) of Bos taurus (Bovine).